Here is a 541-residue protein sequence, read N- to C-terminus: NEDD8-activating enzyme E1 regulatory subunit (541 aa).

It belongs to the ubiquitin-activating E1 family. ULA1 subfamily. As to quaternary structure, heterodimer of uba-3 and ula-1. The complex binds NEDD8 and ubc-12.

It functions in the pathway protein modification; protein neddylation. In terms of biological role, regulatory subunit of the dimeric uba-3-ula-1 E1 enzyme. E1 activates NEDD8 by first adenylating its C-terminal glycine residue with ATP, thereafter linking this residue to the side chain of the catalytic cysteine, yielding a NEDD8-rfl-1 (uba-3) thioester and free AMP. E1 finally transfers NEDD8 to the catalytic cysteine of ubc-12. Required for rfl-1 (uba-3) nuclear localization during early embryonic development. This Caenorhabditis elegans protein is NEDD8-activating enzyme E1 regulatory subunit (ula-1).